The chain runs to 548 residues: Membrane protein insertase YidC (548 aa).

The chain crosses the membrane as a helical span at residues 6–26 (NLLVIALLFVSFMIWQAWEQD). A disordered region spans residues 28 to 56 (NPQPQTQQTTQTTTTAAGSAADQGVPASG). A compositionally biased stretch (low complexity) spans 29-42 (PQPQTQQTTQTTTT). Transmembrane regions (helical) follow at residues 350–370 (FVGNWGFSIIIITFIVRGIMY), 424–444 (FPLIIQMPIFLALYYMLMGSI), 458–478 (LSAQDPYYILPILMGVTMFFI), and 499–519 (PVIFTVFFLWFPSGLVLYYIV).

It belongs to the OXA1/ALB3/YidC family. Type 1 subfamily. In terms of assembly, interacts with the Sec translocase complex via SecD. Specifically interacts with transmembrane segments of nascent integral membrane proteins during membrane integration.

Its subcellular location is the cell inner membrane. Required for the insertion and/or proper folding and/or complex formation of integral membrane proteins into the membrane. Involved in integration of membrane proteins that insert both dependently and independently of the Sec translocase complex, as well as at least some lipoproteins. Aids folding of multispanning membrane proteins. This chain is Membrane protein insertase YidC, found in Salmonella newport (strain SL254).